Consider the following 273-residue polypeptide: Ethanolamine ammonia-lyase small subunit (273 aa).

Positions 164, 185, and 214 each coordinate adenosylcob(III)alamin.

Belongs to the EutC family. The basic unit is a heterodimer which dimerizes to form tetramers. The heterotetramers trimerize; 6 large subunits form a core ring with 6 small subunits projecting outwards. Adenosylcob(III)alamin is required as a cofactor.

The protein localises to the bacterial microcompartment. It catalyses the reaction ethanolamine = acetaldehyde + NH4(+). Its pathway is amine and polyamine degradation; ethanolamine degradation. Functionally, catalyzes the deamination of various vicinal amino-alcohols to oxo compounds. Allows this organism to utilize ethanolamine as the sole source of nitrogen and carbon in the presence of external vitamin B12. This chain is Ethanolamine ammonia-lyase small subunit, found in Pseudomonas aeruginosa (strain LESB58).